The following is a 238-amino-acid chain: Large ribosomal subunit protein uL5c (238 aa).

Belongs to the universal ribosomal protein uL5 family. Part of the 50S ribosomal subunit; contacts the 5S rRNA.

Its subcellular location is the plastid. It is found in the chloroplast. In terms of biological role, binds 5S rRNA, forms part of the central protuberance of the 50S subunit. This chain is Large ribosomal subunit protein uL5c (rpl5), found in Trieres chinensis (Marine centric diatom).